Reading from the N-terminus, the 244-residue chain is Orotidine 5'-phosphate decarboxylase (244 aa).

Substrate is bound by residues aspartate 12, lysine 34, 61 to 70 (DLKLFDIPNT), threonine 125, arginine 187, glutamine 196, glycine 216, and arginine 217. Catalysis depends on lysine 63, which acts as the Proton donor.

It belongs to the OMP decarboxylase family. Type 1 subfamily. As to quaternary structure, homodimer.

The catalysed reaction is orotidine 5'-phosphate + H(+) = UMP + CO2. Its pathway is pyrimidine metabolism; UMP biosynthesis via de novo pathway; UMP from orotate: step 2/2. Its function is as follows. Catalyzes the decarboxylation of orotidine 5'-monophosphate (OMP) to uridine 5'-monophosphate (UMP). The chain is Orotidine 5'-phosphate decarboxylase from Dictyoglomus thermophilum (strain ATCC 35947 / DSM 3960 / H-6-12).